Consider the following 370-residue polypeptide: 3-dehydroquinate synthase (370 aa).

Residues 112-116 (GVVGD), 136-137 (TS), Lys149, Lys158, and 176-179 (TLRT) contribute to the NAD(+) site. 3 residues coordinate Zn(2+): Glu191, His254, and His276.

This sequence belongs to the sugar phosphate cyclases superfamily. Dehydroquinate synthase family. The cofactor is Co(2+). Zn(2+) serves as cofactor. NAD(+) is required as a cofactor.

The protein localises to the cytoplasm. It catalyses the reaction 7-phospho-2-dehydro-3-deoxy-D-arabino-heptonate = 3-dehydroquinate + phosphate. Its pathway is metabolic intermediate biosynthesis; chorismate biosynthesis; chorismate from D-erythrose 4-phosphate and phosphoenolpyruvate: step 2/7. Functionally, catalyzes the conversion of 3-deoxy-D-arabino-heptulosonate 7-phosphate (DAHP) to dehydroquinate (DHQ). This chain is 3-dehydroquinate synthase, found in Xanthomonas oryzae pv. oryzae (strain PXO99A).